The sequence spans 76 residues: Putative defensin-like protein 184 (76 aa).

The signal sequence occupies residues 1-21 (MKNSSILFVLIIVVFLISSSG). Intrachain disulfides connect cysteine 32/cysteine 76, cysteine 38/cysteine 58, cysteine 44/cysteine 70, and cysteine 48/cysteine 72.

Belongs to the DEFL family.

Its subcellular location is the secreted. This is Putative defensin-like protein 184 (LCR18) from Arabidopsis thaliana (Mouse-ear cress).